The sequence spans 845 residues: MELWRQCTHWLIQCRVLPPSHRVTWEGAQVCELAQALRDGVLLCQLLNNLLPQAINLREVNLRPQMSQFLCLKNIRTFLSTCCEKFGLKRSELFEAFDLFDVQDFGKVIYTLSALSWTPIAQNKGIMPFPTEDSALNDEDIYSGLSDQIDDTAEEDEDLYDCVENEEAEGDEIYEDLMRLESVPTPPKMTEYDKRCCCLREIQQTEEKYTDTLGSIQQHFMKPLQRFLKPQDMETIFVNIEELFSVHTHFLKELKDALAGPGATTLYQVFIKYKERFLVYGRYCSQVESASKHLDQVATAREDVQMKLEECSQRANNGRFTLRDLLMVPMQRVLKYHLLLQELVKHTQDATEKENLRLALDAMRDLAQCVNEVKRDNETLRQITNFQLSIENLDQSLANYGRPKIDGELKITSVERRSKTDRYAFLLDKALLICKRRGDSYDLKASVNLHSFQVRDDSSGERDNKKWSHMFLLIEDQGAQGYELFFKTRELKKKWMEQFEMAISNIYPENATANGHDFQMFSFEETTSCKACQMLLRGTFYQGYRCYRCRAPAHKECLGRVPPCGRHGQDFAGTMKKDKLHRRAQDKKRNELGLPKMEVFQEYYGIPPPPGAFGPFLRLNPGDIVELTKAEAEHNWWEGRNTATNEVGWFPCNRVHPYVHGPPQDLSVHLWYAGPMERAGAEGILTNRSDGTYLVRQRVKDTAEFAISIKYNVEVKHIKIMTSEGLYRITEKKAFRGLLELVEFYQQNSLKDCFKSLDTTLQFPYKEPERRAISKPPAGSTKYFGTAKARYDFCARDRSELSLKEGDIIKILNKKGQQGWWRGEIYGRIGWFPSNYVEEDYSEYC.

Positions Met-1 to Pro-119 constitute a Calponin-homology (CH) domain. Positions Lys-194–Val-373 constitute a DH domain. The region spanning Arg-402 to Ser-504 is the PH domain. The Phorbol-ester/DAG-type zinc-finger motif lies at Gly-515–Cys-564. The 69-residue stretch at Leu-592–His-660 folds into the SH3 1 domain. Residues Trp-671 to Tyr-765 enclose the SH2 domain. The 61-residue stretch at Lys-782–Ser-842 folds into the SH3 2 domain. Residues Tyr-826 and Tyr-844 each carry the phosphotyrosine modification.

Interacts with SHB. Interacts with APS, DOCK2, GRB2, GRB3, DOCK2, SLA, TEC and ZNF655/VIK. Interacts with SIAH2; without leading to its degradation. Associates with BLNK, PLCG1, GRB2 and NCK1 in a B-cell antigen receptor-dependent fashion. Interacts with CBLB; which inhibits tyrosine phosphorylation and down-regulates activity. May interact with CCPG1. Interacts with CLNK. Interacts with THEMIS2. Interacts with NEK3 and this interaction is prolactin-dependent. Interacts with ITK. Interacts with PTK2B/PYK2. Interacts with HCK. Interacts with PTK2B/PYK2. Interacts (via SH2 domain) with SYK. Interacts with ANKRD54. Interacts with CD6. Interacts with isoform 2 of CRACR2A. Interacts with LCP2; this interaction plays a role in TCR-mediated cytokine production. In terms of processing, phosphorylated by FYN. Phosphorylated on tyrosine residues by HCK in response to IFNG and bacterial lipopolysaccharide (LPS). Widely expressed in hematopoietic cells but not in other cell types. Found in the spleen and lung.

Its function is as follows. Couples tyrosine kinase signals with the activation of the Rho/Rac GTPases, thus leading to cell differentiation and/or proliferation. The chain is Proto-oncogene vav (Vav1) from Mus musculus (Mouse).